Consider the following 337-residue polypeptide: DNA-directed RNA polymerase subunit alpha (337 aa).

An alpha N-terminal domain (alpha-NTD) region spans residues 1–233; sequence MIQKNWQELI…DQLALFINFK (233 aa). The tract at residues 249-337 is alpha C-terminal domain (alpha-CTD); it reads FNPALLKKVD…DLAKRYEDQY (89 aa).

The protein belongs to the RNA polymerase alpha chain family. Homodimer. The RNAP catalytic core consists of 2 alpha, 1 beta, 1 beta' and 1 omega subunit. When a sigma factor is associated with the core the holoenzyme is formed, which can initiate transcription.

It catalyses the reaction RNA(n) + a ribonucleoside 5'-triphosphate = RNA(n+1) + diphosphate. Functionally, DNA-dependent RNA polymerase catalyzes the transcription of DNA into RNA using the four ribonucleoside triphosphates as substrates. The chain is DNA-directed RNA polymerase subunit alpha from Bartonella henselae (strain ATCC 49882 / DSM 28221 / CCUG 30454 / Houston 1) (Rochalimaea henselae).